Here is a 340-residue protein sequence, read N- to C-terminus: ATP-dependent 6-phosphofructokinase (340 aa).

G11 contributes to the ATP binding site. 21–25 (RAVVR) contributes to the ADP binding site. ATP contacts are provided by residues 72–73 (RY) and 102–105 (GDGS). Mg(2+) is bound at residue D103. 125–127 (TID) contacts substrate. Residue D127 is the Proton acceptor of the active site. Residue R154 coordinates ADP. Residues R162 and 169–171 (MGR) contribute to the substrate site. ADP-binding positions include 185 to 187 (GAD), K211, and 213 to 215 (KNH). Substrate is bound by residues E222, R244, and 250–253 (HIQR).

It belongs to the phosphofructokinase type A (PFKA) family. ATP-dependent PFK group I subfamily. Prokaryotic clade 'B1' sub-subfamily. In terms of assembly, homotetramer. Requires Mg(2+) as cofactor.

The protein localises to the cytoplasm. The enzyme catalyses beta-D-fructose 6-phosphate + ATP = beta-D-fructose 1,6-bisphosphate + ADP + H(+). The protein operates within carbohydrate degradation; glycolysis; D-glyceraldehyde 3-phosphate and glycerone phosphate from D-glucose: step 3/4. Its activity is regulated as follows. Allosterically activated by ADP and other diphosphonucleosides, and allosterically inhibited by phosphoenolpyruvate. Catalyzes the phosphorylation of D-fructose 6-phosphate to fructose 1,6-bisphosphate by ATP, the first committing step of glycolysis. This is ATP-dependent 6-phosphofructokinase from Lactococcus lactis subsp. lactis (Streptococcus lactis).